A 642-amino-acid chain; its full sequence is Palmitoyltransferase akr1 (642 aa).

6 ANK repeats span residues 1–29, 33–62, 67–96, 100–129, 133–162, and 166–196; these read MGSL…DVNA, GGAT…DVNA, LQAA…DPLL, QGFN…SVDL, QQHT…DVLA, and DKMT…PCTA. Over 1-256 the chain is Cytoplasmic; the sequence is MGSLFLAASQ…SKFQFSQKTF (256 aa). Transmembrane regions (helical) follow at residues 257-277 and 278-298; these read IIFC…IMSI and CPMV…FKYI. At 299-316 the chain is on the cytoplasmic side; the sequence is TTCIHANIDIVHFYLETP. Residues 317–337 form a helical membrane-spanning segment; it reads FLAGIFSSIFFWVWCHSLLYI. Topologically, residues 338–343 are lumenal; it reads VPKTLP. The helical transmembrane segment at 344-364 threads the bilayer; it reads IKPLSSLLFVLISFTCIGLYV. Residues 365-444 are Cytoplasmic-facing; that stretch reads RTAFQNPGYV…NCVGARNHRT (80 aa). The region spanning 400–450 is the DHHC domain; that stretch reads HYCLKCFQVKPPRSYHCGACKRCINRYDHHCPWTGNCVGARNHRTFLLFVF. Residue Cys430 is the S-palmitoyl cysteine intermediate of the active site. A helical transmembrane segment spans residues 445-465; the sequence is FLLFVFTLSTLIPIYFYVAFY. Topologically, residues 466 to 496 are lumenal; the sequence is YLQNIPIQKKYESYRCLFISGTICQWSLKDM. Residues 497-517 form a helical membrane-spanning segment; it reads FVLVASLTLFVNWCWVVVLAF. Over 518–642 the chain is Cytoplasmic; that stretch reads TQICQVAHNV…GRQDEATRHV (125 aa).

This sequence belongs to the DHHC palmitoyltransferase family. AKR/ZDHHC17 subfamily.

Its subcellular location is the early endosome membrane. It localises to the golgi apparatus membrane. The enzyme catalyses L-cysteinyl-[protein] + hexadecanoyl-CoA = S-hexadecanoyl-L-cysteinyl-[protein] + CoA. Palmitoyltransferase specific for casein kinase 1. This is Palmitoyltransferase akr1 (akr1) from Schizosaccharomyces pombe (strain 972 / ATCC 24843) (Fission yeast).